A 607-amino-acid chain; its full sequence is MAPACTTAHRRRAPLAAVLMLSLLPLLSPHADAAQVPWHSRTFKYVADNKDLKEVLRDLSASQSIATWISPEVTGTLSGKFETSPQEFLDDLAATYGFVWYYDGAVLRIWGANESKSATLSLGTASTKSLRDALARMRLDDPRFPVRYDEAAHVAVVSGPPGYVDTVSAIAKQVEQGARQRDATEVQVFQLHYAQAADHTTRIGGQDVQIPGMASLLRSMYGARGAPVAAIPGPGANFGRVQPIGGGSSNTFGNAAQGQGGGASGILGLPSSWFGGASSSDRVPVSPPLPGSGAAAAAGSPASVWPELSKGRRDESNPIDAGGGAELASDAPVIEADPRTNAILIRDRPERMQSYGTLIQQLDNRPKLLQIDATIIEIRDGAMQDLGVDWRFHSQHTDIQTGDGRGGQLGFNGALSGAATDGATTPVGGTLTAVLGDAGRYLMTRVSALETTNKAKIVSSPQVATLDNVEAVMDHKQQAFVRVSGYASADLYNLSAGVSLRVLPSVVPGSPNGQMRLDVRIEDGQLGSNTVDGIPVITSSEITTQAFVNEGQSLLIAGYAYDADETDLNAIPGLSKIPLVGNLFKHRQKSGTRMQRLFLLTPHVVSP.

A signal peptide spans 1-33; that stretch reads MAPACTTAHRRRAPLAAVLMLSLLPLLSPHADA. Residues 277 to 332 form a disordered region; that stretch reads ASSSDRVPVSPPLPGSGAAAAAGSPASVWPELSKGRRDESNPIDAGGGAELASDAP. The span at 291-306 shows a compositional bias: low complexity; that stretch reads GSGAAAAAGSPASVWP.

This sequence belongs to the bacterial secretin family. T3SS SctC subfamily. As to quaternary structure, the core secretion machinery of the T3SS is composed of approximately 20 different proteins, including cytoplasmic components, a base, an export apparatus and a needle. This subunit is part of the base, which anchors the injectisome in the bacterial cell envelope. Forms a stable homooligomeric complex.

It is found in the cell outer membrane. Its function is as follows. Component of the type III secretion system (T3SS), also called injectisome, which is used to inject bacterial effector proteins into eukaryotic host cells. Forms a ring-shaped multimeric structure with an apparent central pore in the outer membrane. Necessary for both basic pathogenicity and the induction of the hypersensitive response in resistant plants. This chain is Type 3 secretion system secretin, found in Xanthomonas euvesicatoria.